The chain runs to 393 residues: NAD(P)H-quinone oxidoreductase subunit H, chloroplastic (393 aa).

Belongs to the complex I 49 kDa subunit family. In terms of assembly, NDH is composed of at least 16 different subunits, 5 of which are encoded in the nucleus.

It is found in the plastid. The protein localises to the chloroplast thylakoid membrane. It catalyses the reaction a plastoquinone + NADH + (n+1) H(+)(in) = a plastoquinol + NAD(+) + n H(+)(out). It carries out the reaction a plastoquinone + NADPH + (n+1) H(+)(in) = a plastoquinol + NADP(+) + n H(+)(out). In terms of biological role, NDH shuttles electrons from NAD(P)H:plastoquinone, via FMN and iron-sulfur (Fe-S) centers, to quinones in the photosynthetic chain and possibly in a chloroplast respiratory chain. The immediate electron acceptor for the enzyme in this species is believed to be plastoquinone. Couples the redox reaction to proton translocation, and thus conserves the redox energy in a proton gradient. This chain is NAD(P)H-quinone oxidoreductase subunit H, chloroplastic, found in Sorghum bicolor (Sorghum).